Consider the following 170-residue polypeptide: Putative 4-hydroxy-4-methyl-2-oxoglutarate aldolase (170 aa).

Substrate is bound by residues 85–88 and arginine 107; that span reads GDMI. Position 108 (aspartate 108) interacts with a divalent metal cation.

This sequence belongs to the class II aldolase/RraA-like family. In terms of assembly, homotrimer. It depends on a divalent metal cation as a cofactor.

It carries out the reaction 4-hydroxy-4-methyl-2-oxoglutarate = 2 pyruvate. It catalyses the reaction oxaloacetate + H(+) = pyruvate + CO2. Its function is as follows. Catalyzes the aldol cleavage of 4-hydroxy-4-methyl-2-oxoglutarate (HMG) into 2 molecules of pyruvate. Also contains a secondary oxaloacetate (OAA) decarboxylase activity due to the common pyruvate enolate transition state formed following C-C bond cleavage in the retro-aldol and decarboxylation reactions. The chain is Putative 4-hydroxy-4-methyl-2-oxoglutarate aldolase from Acinetobacter baylyi (strain ATCC 33305 / BD413 / ADP1).